Here is a 577-residue protein sequence, read N- to C-terminus: Glucose-6-phosphate 1-dehydrogenase, chloroplastic (577 aa).

The tract at residues 1–20 (MGVQLRLNPCSSSSAATSPS) is disordered. Residues 1–63 (MGVQLRLNPC…QPRKHFEVFS (63 aa)) constitute a chloroplast transit peptide. The segment covering 11-20 (SSSSAATSPS) has biased composition (low complexity). NADP(+) is bound by residues 97 to 104 (GASGDLAK) and Arg-131. Residues Cys-149 and Cys-157 are joined by a disulfide bond. An NADP(+)-binding site is contributed by Lys-234. Residues Lys-234, 264 to 268 (HYLGK), Glu-302, and Asp-321 each bind D-glucose 6-phosphate. The active-site Proton acceptor is His-326. Lys-419 lines the NADP(+) pocket. Lys-422 and Lys-427 together coordinate D-glucose 6-phosphate. Arg-428, Arg-432, and Arg-461 together coordinate NADP(+). Gln-463 contacts D-glucose 6-phosphate. Residues 469 to 471 (YLK) and Arg-554 each bind NADP(+).

The protein belongs to the glucose-6-phosphate dehydrogenase family. Homodimer. Green tissues, leaves and chloroplasts.

The protein resides in the plastid. The protein localises to the chloroplast. It catalyses the reaction D-glucose 6-phosphate + NADP(+) = 6-phospho-D-glucono-1,5-lactone + NADPH + H(+). It functions in the pathway carbohydrate degradation; pentose phosphate pathway; D-ribulose 5-phosphate from D-glucose 6-phosphate (oxidative stage): step 1/3. Its activity is regulated as follows. Regulated by metabolites. Post-translationally inactivated by cysteine-mediated redox modification via the ferredoxin-thioredoxin system in the light and this avoids futile cycles with photosynthetic CO2 fixation. Functionally, catalyzes the rate-limiting step of the oxidative pentose-phosphate pathway, which represents a route for the dissimilation of carbohydrates besides glycolysis. The main function of this enzyme is to provide reducing power (NADPH) and pentose phosphates for fatty acid and nucleic acid synthesis which are involved in membrane synthesis and cell division. This is Glucose-6-phosphate 1-dehydrogenase, chloroplastic from Solanum tuberosum (Potato).